The chain runs to 371 residues: Queuine tRNA-ribosyltransferase (371 aa).

Catalysis depends on D90, which acts as the Proton acceptor. Substrate is bound by residues 90–94 (DSGGF), D144, Q185, and G212. The RNA binding stretch occupies residues 243–249 (GVGTPED). D262 acts as the Nucleophile in catalysis. An RNA binding; important for wobble base 34 recognition region spans residues 267–271 (TRNAR). 4 residues coordinate Zn(2+): C300, C302, C305, and H331.

It belongs to the queuine tRNA-ribosyltransferase family. Homodimer. Within each dimer, one monomer is responsible for RNA recognition and catalysis, while the other monomer binds to the replacement base PreQ1. The cofactor is Zn(2+).

It catalyses the reaction 7-aminomethyl-7-carbaguanine + guanosine(34) in tRNA = 7-aminomethyl-7-carbaguanosine(34) in tRNA + guanine. It participates in tRNA modification; tRNA-queuosine biosynthesis. Catalyzes the base-exchange of a guanine (G) residue with the queuine precursor 7-aminomethyl-7-deazaguanine (PreQ1) at position 34 (anticodon wobble position) in tRNAs with GU(N) anticodons (tRNA-Asp, -Asn, -His and -Tyr). Catalysis occurs through a double-displacement mechanism. The nucleophile active site attacks the C1' of nucleotide 34 to detach the guanine base from the RNA, forming a covalent enzyme-RNA intermediate. The proton acceptor active site deprotonates the incoming PreQ1, allowing a nucleophilic attack on the C1' of the ribose to form the product. After dissociation, two additional enzymatic reactions on the tRNA convert PreQ1 to queuine (Q), resulting in the hypermodified nucleoside queuosine (7-(((4,5-cis-dihydroxy-2-cyclopenten-1-yl)amino)methyl)-7-deazaguanosine). This chain is Queuine tRNA-ribosyltransferase, found in Acidithiobacillus ferrooxidans (strain ATCC 23270 / DSM 14882 / CIP 104768 / NCIMB 8455) (Ferrobacillus ferrooxidans (strain ATCC 23270)).